Consider the following 490-residue polypeptide: Bifunctional protein HldE (490 aa).

Positions 1-330 (MFSFDALLQA…RRILPHASLA (330 aa)) are ribokinase. 205–208 (NRKE) lines the ATP pocket. The active site involves Asp-275. The cytidylyltransferase stretch occupies residues 358-490 (FTNGCFDILH…LVARAREGQS (133 aa)).

This sequence in the N-terminal section; belongs to the carbohydrate kinase PfkB family. The protein in the C-terminal section; belongs to the cytidylyltransferase family. As to quaternary structure, homodimer.

It carries out the reaction D-glycero-beta-D-manno-heptose 7-phosphate + ATP = D-glycero-beta-D-manno-heptose 1,7-bisphosphate + ADP + H(+). The catalysed reaction is D-glycero-beta-D-manno-heptose 1-phosphate + ATP + H(+) = ADP-D-glycero-beta-D-manno-heptose + diphosphate. It participates in nucleotide-sugar biosynthesis; ADP-L-glycero-beta-D-manno-heptose biosynthesis; ADP-L-glycero-beta-D-manno-heptose from D-glycero-beta-D-manno-heptose 7-phosphate: step 1/4. It functions in the pathway nucleotide-sugar biosynthesis; ADP-L-glycero-beta-D-manno-heptose biosynthesis; ADP-L-glycero-beta-D-manno-heptose from D-glycero-beta-D-manno-heptose 7-phosphate: step 3/4. In terms of biological role, catalyzes the phosphorylation of D-glycero-D-manno-heptose 7-phosphate at the C-1 position to selectively form D-glycero-beta-D-manno-heptose-1,7-bisphosphate. Functionally, catalyzes the ADP transfer from ATP to D-glycero-beta-D-manno-heptose 1-phosphate, yielding ADP-D-glycero-beta-D-manno-heptose. The protein is Bifunctional protein HldE of Rhodopseudomonas palustris (strain ATCC BAA-98 / CGA009).